A 208-amino-acid polypeptide reads, in one-letter code: FMN-dependent NADH:quinone oxidoreductase (208 aa).

Residues Ser9, 15-17 (SAS), 96-99 (MYNF), and 140-143 (TRGG) each bind FMN.

The protein belongs to the azoreductase type 1 family. As to quaternary structure, homodimer. The cofactor is FMN.

The enzyme catalyses 2 a quinone + NADH + H(+) = 2 a 1,4-benzosemiquinone + NAD(+). It catalyses the reaction N,N-dimethyl-1,4-phenylenediamine + anthranilate + 2 NAD(+) = 2-(4-dimethylaminophenyl)diazenylbenzoate + 2 NADH + 2 H(+). Functionally, quinone reductase that provides resistance to thiol-specific stress caused by electrophilic quinones. Its function is as follows. Also exhibits azoreductase activity. Catalyzes the reductive cleavage of the azo bond in aromatic azo compounds to the corresponding amines. This chain is FMN-dependent NADH:quinone oxidoreductase, found in Ralstonia nicotianae (strain ATCC BAA-1114 / GMI1000) (Ralstonia solanacearum).